Consider the following 77-residue polypeptide: Large ribosomal subunit protein bL28 (77 aa).

Residues 1-20 (MSRVCQVTGKGPVTGNNISH) form a disordered region.

Belongs to the bacterial ribosomal protein bL28 family.

This is Large ribosomal subunit protein bL28 from Pseudomonas fluorescens (strain Pf0-1).